Consider the following 122-residue polypeptide: Large ribosomal subunit protein bL12 (122 aa).

This sequence belongs to the bacterial ribosomal protein bL12 family. In terms of assembly, homodimer. Part of the ribosomal stalk of the 50S ribosomal subunit. Forms a multimeric L10(L12)X complex, where L10 forms an elongated spine to which 2 to 4 L12 dimers bind in a sequential fashion. Binds GTP-bound translation factors.

Functionally, forms part of the ribosomal stalk which helps the ribosome interact with GTP-bound translation factors. Is thus essential for accurate translation. This is Large ribosomal subunit protein bL12 from Buchnera aphidicola subsp. Schizaphis graminum (strain Sg).